Consider the following 64-residue polypeptide: MSKIKSHSGAAKRFKRTANGFKHKQSHTSHILTKKSTKRKRHLRSMNQIAQSDKALIVRMLPYI.

The span at Met1 to Arg44 shows a compositional bias: basic residues. Residues Met1–Gln48 form a disordered region.

It belongs to the bacterial ribosomal protein bL35 family.

This Marinomonas sp. (strain MWYL1) protein is Large ribosomal subunit protein bL35.